Consider the following 349-residue polypeptide: MTVLNRMDTLAEDMVADITDSPTGYTGVDGDAQWAAEVRRLAKLRGATILAHNYQLPEIQDVADHVGDSLALSRIAAEAPEDTIVFCGVHFMAETAKILSPDKTVLIPDQRAGCSLADSITPEDLRAWKDEHPGAVVVSYFNTTAAVKALTDICCTSSNAVDVVASIDPDREVLFCPDQFLGAHVRRMTGRENLHVWAGECHVHAGINGDELGERARANPDAELFVHPECGCATSALYLAGEGAFPAERVKILSTGGMLDAANTTSARKVLVATEVGMLYQLRRAAPQVDFQAVNDRASCRYMKMITPAALLRCLVEGADEVHVDPGIAAAGRRSVQRMIEIGQPGGGE.

2 residues coordinate iminosuccinate: His-52 and Ser-69. Residue Cys-114 coordinates [4Fe-4S] cluster. Residues 140 to 142 and Ser-157 contribute to the iminosuccinate site; that span reads YFN. Cys-201 is a [4Fe-4S] cluster binding site. Iminosuccinate-binding positions include 227–229 and Thr-255; that span reads HPE. A [4Fe-4S] cluster-binding site is contributed by Cys-300.

It belongs to the quinolinate synthase family. Type 2 subfamily. Requires [4Fe-4S] cluster as cofactor.

The protein localises to the cytoplasm. It carries out the reaction iminosuccinate + dihydroxyacetone phosphate = quinolinate + phosphate + 2 H2O + H(+). The protein operates within cofactor biosynthesis; NAD(+) biosynthesis; quinolinate from iminoaspartate: step 1/1. In terms of biological role, catalyzes the condensation of iminoaspartate with dihydroxyacetone phosphate to form quinolinate. The sequence is that of Quinolinate synthase from Mycolicibacterium paratuberculosis (strain ATCC BAA-968 / K-10) (Mycobacterium paratuberculosis).